We begin with the raw amino-acid sequence, 133 residues long: Putative elongation factor 1-delta-like protein (133 aa).

Over residues 58-73 (SLAGSLGPGASSGPSG) the composition is skewed to low complexity. Disordered regions lie at residues 58 to 77 (SLAGSLGPGASSGPSGDHSE) and 89 to 133 (NQRD…TSRG). Residues 89 to 102 (NQRDLAERAGEELA) are compositionally biased toward basic and acidic residues.

The protein belongs to the EF-1-beta/EF-1-delta family.

In Homo sapiens (Human), this protein is Putative elongation factor 1-delta-like protein (EEF1DP3).